The chain runs to 582 residues: uncharacterized protein (582 aa).

6 consecutive transmembrane segments (helical) span residues 17–37 (VAML…LPTV), 57–77 (LGAV…GAVY), 131–151 (MTAT…IMAI), 156–176 (ALTW…YWII), 239–259 (ALML…LIWF), and 271–291 (VGSL…VLMA). The region spanning 17-300 (VAMLMMLQLV…ATMTLAVLPR (284 aa)) is the ABC transmembrane type-1 domain. The 237-residue stretch at 335 to 571 (VRLAGATFTY…CPTYAEFAAS (237 aa)) folds into the ABC transporter domain. 369 to 376 (GSTGSGKS) is an ATP binding site.

It belongs to the ABC transporter superfamily. MsbA family.

It localises to the cell membrane. This is an uncharacterized protein from Mycobacterium bovis (strain ATCC BAA-935 / AF2122/97).